Reading from the N-terminus, the 330-residue chain is Syntaxin-121 (330 aa).

Residues 1-10 show a composition bias toward polar residues; it reads MNNLFSSSWK. A disordered region spans residues 1-39; it reads MNNLFSSSWKRTGGGGGGDGDIESGGGVEMAPPPGAAAG. Topologically, residues 1-284 are cytoplasmic; that stretch reads MNNLFSSSWK…RKHQKSTRKW (284 aa). Positions 12 to 28 are enriched in gly residues; the sequence is TGGGGGGDGDIESGGGV. The 63-residue stretch at 212 to 274 folds into the t-SNARE coiled-coil homology domain; sequence VAEIQERHGA…DRGREQLVVA (63 aa). Residues 285–305 form a helical; Anchor for type IV membrane protein membrane-spanning segment; sequence TCIAIIILLVLILVVVLPIVL. Residues 306-330 lie on the Vesicular side of the membrane; sequence KFVNNNKSSSSSPAPATPSPPPPTA. The disordered stretch occupies residues 311–330; sequence NKSSSSSPAPATPSPPPPTA. Pro residues predominate over residues 320–330; the sequence is PATPSPPPPTA.

The protein belongs to the syntaxin family. Interacts with SNAP32. As to expression, expressed in roots, stems, leaf blades and leaf sheaths.

It is found in the cell membrane. Vesicle trafficking protein that functions in the secretory pathway. Involved in plant defense by mediating host resistance to the rice blast fungus Magnaporthe oryzae. The interaction with SNAP32 may contribute to host resistance to the rice blast fungus. The polypeptide is Syntaxin-121 (Oryza sativa subsp. japonica (Rice)).